We begin with the raw amino-acid sequence, 119 residues long: Large ribosomal subunit protein uL18 (119 aa).

Belongs to the universal ribosomal protein uL18 family. Part of the 50S ribosomal subunit; part of the 5S rRNA/L5/L18/L25 subcomplex. Contacts the 5S and 23S rRNAs.

This is one of the proteins that bind and probably mediate the attachment of the 5S RNA into the large ribosomal subunit, where it forms part of the central protuberance. The sequence is that of Large ribosomal subunit protein uL18 from Tropheryma whipplei (strain TW08/27) (Whipple's bacillus).